A 208-amino-acid chain; its full sequence is GATA transcription factor 29 (208 aa).

A GATA-type; atypical zinc finger spans residues 155 to 208 (GMKKCTNMNCNALNTPMWRRGPLGPKSLCNACGIKFRKEEERKAKRNVVIVLDD).

This sequence belongs to the type IV zinc-finger family. Class B subfamily.

The protein localises to the nucleus. In terms of biological role, transcriptional regulator that specifically binds 5'-GATA-3' or 5'-GAT-3' motifs within gene promoters. The sequence is that of GATA transcription factor 29 (GATA29) from Arabidopsis thaliana (Mouse-ear cress).